The chain runs to 546 residues: Glucose-6-phosphate isomerase (546 aa).

Glutamate 355 functions as the Proton donor in the catalytic mechanism. Catalysis depends on residues histidine 386 and lysine 510.

It belongs to the GPI family.

The protein resides in the cytoplasm. It carries out the reaction alpha-D-glucose 6-phosphate = beta-D-fructose 6-phosphate. It functions in the pathway carbohydrate biosynthesis; gluconeogenesis. It participates in carbohydrate degradation; glycolysis; D-glyceraldehyde 3-phosphate and glycerone phosphate from D-glucose: step 2/4. Its function is as follows. Catalyzes the reversible isomerization of glucose-6-phosphate to fructose-6-phosphate. The chain is Glucose-6-phosphate isomerase from Buchnera aphidicola subsp. Cinara cedri (strain Cc).